Reading from the N-terminus, the 302-residue chain is Pseudouridine-5'-phosphate glycosidase (302 aa).

The active-site Proton donor is the E25. The substrate site is built by K86 and V106. D138 contributes to the Mn(2+) binding site. 140–142 (SAD) is a substrate binding site. K159 acts as the Nucleophile in catalysis.

Belongs to the pseudouridine-5'-phosphate glycosidase family. Homotrimer. Mn(2+) is required as a cofactor.

It carries out the reaction D-ribose 5-phosphate + uracil = psi-UMP + H2O. Functionally, catalyzes the reversible cleavage of pseudouridine 5'-phosphate (PsiMP) to ribose 5-phosphate and uracil. Functions biologically in the cleavage direction, as part of a pseudouridine degradation pathway. This Glaesserella parasuis serovar 5 (strain SH0165) (Haemophilus parasuis) protein is Pseudouridine-5'-phosphate glycosidase.